We begin with the raw amino-acid sequence, 159 residues long: MPKFYCDYCDTYLTHDSPSVRKTHCSGRKHKENVKDYYQKWMEEQAQSLIDKTTAAFQQGKIPPTPFSAPPPAGAMIPPPPSLPGPPRPGMMPAPHMGGPPMMPMMGPPPPGMMPVGPAPGMRPPMGGHMPMMPGPPMMRPPARPMMVPTRPGMTRPDR.

Residues 4-36 (FYCDYCDTYLTHDSPSVRKTHCSGRKHKENVKD) form a Matrin-type zinc finger. At Y8 the chain carries Phosphotyrosine. S17 carries the phosphoserine modification. K52 carries the post-translational modification N6-acetyllysine. Disordered stretches follow at residues 62–96 (IPPT…PAPH) and 140–159 (RPPA…RPDR). Pro residues predominate over residues 63–92 (PPTPFSAPPPAGAMIPPPPSLPGPPRPGMM).

It belongs to the U1 small nuclear ribonucleoprotein C family. Component of the U1 snRNP. The U1 snRNP is composed of the U1 snRNA and the 7 core Sm proteins SNRPB, SNRPD1, SNRPD2, SNRPD3, SNRPE, SNRPF and SNRPG that assemble in a heptameric protein ring on the Sm site of the small nuclear RNA to form the core snRNP, and at least 3 U1 snRNP-specific proteins SNRNP70/U1-70K, SNRPA/U1-A and SNRPC/U1-C. SNRPC/U1-C interacts with U1 snRNA and the 5' splice-site region of the pre-mRNA. Interacts (via N-terminus) with TIA1 (via C-terminus); thereby promoting spliceosomal U1 snRNP recruitment to 5' splice sites.

It localises to the nucleus. Functionally, component of the spliceosomal U1 snRNP, which is essential for recognition of the pre-mRNA 5' splice-site and the subsequent assembly of the spliceosome. SNRPC/U1-C is directly involved in initial 5' splice-site recognition for both constitutive and regulated alternative splicing. The interaction with the 5' splice-site seems to precede base-pairing between the pre-mRNA and the U1 snRNA. Stimulates commitment or early (E) complex formation by stabilizing the base pairing of the 5' end of the U1 snRNA and the 5' splice-site region. The sequence is that of U1 small nuclear ribonucleoprotein C from Homo sapiens (Human).